Reading from the N-terminus, the 96-residue chain is Protein Vpr (96 aa).

Positions 1–42 are homooligomerization; the sequence is MEQAPEDQGPQREPHNEWTLELLEEIKNEAVRHFPRVWLHQL. Phosphoserine; by host occurs at positions 79, 94, and 96.

The protein belongs to the HIV-1 VPR protein family. As to quaternary structure, homooligomer, may form homodimer. Interacts with p6-gag region of the Pr55 Gag precursor protein through a (Leu-X-X)4 motif near the C-terminus of the P6gag protein. Interacts with host UNG. May interact with host RAD23A/HHR23A. Interacts with host VPRBP/DCAF1, leading to hijack the CUL4A-RBX1-DDB1-DCAF1/VPRBP complex, mediating ubiquitination of host proteins such as TERT and ZGPAT and arrest of the cell cycle in G2 phase. Phosphorylated on several residues by host. These phosphorylations regulate VPR activity for the nuclear import of the HIV-1 pre-integration complex.

The protein localises to the virion. It is found in the host nucleus. Its subcellular location is the host extracellular space. Its function is as follows. During virus replication, may deplete host UNG protein, and incude G2-M cell cycle arrest. Acts by targeting specific host proteins for degradation by the 26S proteasome, through association with the cellular CUL4A-DDB1 E3 ligase complex by direct interaction with host VPRPB/DCAF-1. Cell cycle arrest reportedly occurs within hours of infection and is not blocked by antiviral agents, suggesting that it is initiated by the VPR carried into the virion. Additionally, VPR induces apoptosis in a cell cycle dependent manner suggesting that these two effects are mechanistically linked. Detected in the serum and cerebrospinal fluid of AIDS patient, VPR may also induce cell death to bystander cells. Functionally, during virus entry, plays a role in the transport of the viral pre-integration (PIC) complex to the host nucleus. This function is crucial for viral infection of non-dividing macrophages. May act directly at the nuclear pore complex, by binding nucleoporins phenylalanine-glycine (FG)-repeat regions. The protein is Protein Vpr of Homo sapiens (Human).